The chain runs to 118 residues: Small ribosomal subunit protein uS13 (118 aa).

The disordered stretch occupies residues 92–118; that stretch reads RRGHPLRGQRTRTNARTRKGPRKAIRK.

This sequence belongs to the universal ribosomal protein uS13 family. As to quaternary structure, part of the 30S ribosomal subunit. Forms a loose heterodimer with protein S19. Forms two bridges to the 50S subunit in the 70S ribosome.

Located at the top of the head of the 30S subunit, it contacts several helices of the 16S rRNA. In the 70S ribosome it contacts the 23S rRNA (bridge B1a) and protein L5 of the 50S subunit (bridge B1b), connecting the 2 subunits; these bridges are implicated in subunit movement. Contacts the tRNAs in the A and P-sites. This chain is Small ribosomal subunit protein uS13, found in Xanthomonas campestris pv. campestris (strain ATCC 33913 / DSM 3586 / NCPPB 528 / LMG 568 / P 25).